A 638-amino-acid chain; its full sequence is Phosphomethylpyrimidine synthase (638 aa).

Substrate is bound by residues asparagine 243, methionine 272, tyrosine 301, histidine 337, 357–359 (SRG), 398–401 (DGLR), and glutamate 437. Residue histidine 441 coordinates Zn(2+). Tyrosine 464 lines the substrate pocket. Histidine 505 serves as a coordination point for Zn(2+). [4Fe-4S] cluster contacts are provided by cysteine 585, cysteine 588, and cysteine 593.

This sequence belongs to the ThiC family. In terms of assembly, homodimer. It depends on [4Fe-4S] cluster as a cofactor.

It carries out the reaction 5-amino-1-(5-phospho-beta-D-ribosyl)imidazole + S-adenosyl-L-methionine = 4-amino-2-methyl-5-(phosphooxymethyl)pyrimidine + CO + 5'-deoxyadenosine + formate + L-methionine + 3 H(+). The protein operates within cofactor biosynthesis; thiamine diphosphate biosynthesis. In terms of biological role, catalyzes the synthesis of the hydroxymethylpyrimidine phosphate (HMP-P) moiety of thiamine from aminoimidazole ribotide (AIR) in a radical S-adenosyl-L-methionine (SAM)-dependent reaction. The chain is Phosphomethylpyrimidine synthase from Aromatoleum aromaticum (strain DSM 19018 / LMG 30748 / EbN1) (Azoarcus sp. (strain EbN1)).